Consider the following 129-residue polypeptide: MDLDTKEIIKNMDLKFRNIDGKKLLLAISTDKDRNILMTAFMNEESLEKSIETGFMHYYSTSRNKLWRKGEESGNVQKIIDVFRDCDGDALLFTVEQTGWACHEGYMSCFHNKIDLNTGKFTVVGNKLD.

D85 is a Mg(2+) binding site. A Zn(2+)-binding site is contributed by C86. The Mg(2+) site is built by D87 and D89. Zn(2+)-binding residues include C102 and C109.

The protein belongs to the PRA-CH family. Homodimer. Mg(2+) serves as cofactor. It depends on Zn(2+) as a cofactor.

Its subcellular location is the cytoplasm. The enzyme catalyses 1-(5-phospho-beta-D-ribosyl)-5'-AMP + H2O = 1-(5-phospho-beta-D-ribosyl)-5-[(5-phospho-beta-D-ribosylamino)methylideneamino]imidazole-4-carboxamide. The protein operates within amino-acid biosynthesis; L-histidine biosynthesis; L-histidine from 5-phospho-alpha-D-ribose 1-diphosphate: step 3/9. Its function is as follows. Catalyzes the hydrolysis of the adenine ring of phosphoribosyl-AMP. The sequence is that of Phosphoribosyl-AMP cyclohydrolase from Methanococcus maripaludis (strain C7 / ATCC BAA-1331).